The primary structure comprises 480 residues: F-box only protein 3 (480 aa).

One can recognise an F-box domain in the interval 10 to 56 (LLTLESLPTDPLLLILSFVDYRDLINCCYVSRRLSQLSTHDPLWRRH). Positions 278–408 (VATTGDITVS…FHMACPTFRV (131 aa)) constitute an ApaG domain. The span at 419 to 459 (EYEEMEEEAEEEEEEENDDSADMDESDESDEDENESDEGEG) shows a compositional bias: acidic residues. The interval 419-464 (EYEEMEEEAEEEEEEENDDSADMDESDESDEDENESDEGEGEERRR) is disordered.

As to quaternary structure, part of a SCF (SKP1-cullin-F-box) protein ligase complex SCF(FBXO3) consisting of FBXO3, SKP1, CUL1 and RBX1. Interacts with PML, interaction is direct and takes place either alone or within the SCF complex.

Its subcellular location is the nucleus. It functions in the pathway protein modification; protein ubiquitination. Its function is as follows. Substrate recognition component of the SCF (SKP1-CUL1-F-box protein)-type E3 ubiquitin ligase complex, SCF(FBXO3), which mediates the ubiquitination and subsequent proteasomal degradation of target proteins. Mediates the ubiquitination of HIPK2 and probably that of EP300, leading to rapid degradation by the proteasome. In the presence of PML, HIPK2 ubiquitination still occurs, but degradation is prevented. PML, HIPK2 and FBXO3 may act synergically to activate p53/TP53-dependent transactivation. The SCF(FBXO3) also acts as a regulator of inflammation by mediating ubiquitination and degradation of FBXL2 in response to lipopolysaccharide (LPS). The SCF(FBXO3) complex specifically recognizes FBXL2 phosphorylated at 'Thr-404' and promotes its ubiquitination. This is F-box only protein 3 (Fbxo3) from Rattus norvegicus (Rat).